We begin with the raw amino-acid sequence, 330 residues long: tRNA dimethylallyltransferase (330 aa).

Over residues 1–11 (MDYSHSDSPST) the composition is skewed to polar residues. The tract at residues 1–21 (MDYSHSDSPSTAPAGKTPVDQ) is disordered. 29-36 (GPTGAGKS) contacts ATP. Residue 31–36 (TGAGKS) coordinates substrate. An interaction with substrate tRNA region spans residues 56–59 (DSMQ).

This sequence belongs to the IPP transferase family. In terms of assembly, monomer. Requires Mg(2+) as cofactor.

It catalyses the reaction adenosine(37) in tRNA + dimethylallyl diphosphate = N(6)-dimethylallyladenosine(37) in tRNA + diphosphate. Its function is as follows. Catalyzes the transfer of a dimethylallyl group onto the adenine at position 37 in tRNAs that read codons beginning with uridine, leading to the formation of N6-(dimethylallyl)adenosine (i(6)A). The polypeptide is tRNA dimethylallyltransferase (Corynebacterium urealyticum (strain ATCC 43042 / DSM 7109)).